Consider the following 79-residue polypeptide: Acyl carrier protein (79 aa).

Residues 2–77 (STIEERVKKI…QAIDYVKAHV (76 aa)) form the Carrier domain. Serine 37 is subject to O-(pantetheine 4'-phosphoryl)serine.

It belongs to the acyl carrier protein (ACP) family. 4'-phosphopantetheine is transferred from CoA to a specific serine of apo-ACP by AcpS. This modification is essential for activity because fatty acids are bound in thioester linkage to the sulfhydryl of the prosthetic group.

Its subcellular location is the cytoplasm. It participates in lipid metabolism; fatty acid biosynthesis. Functionally, carrier of the growing fatty acid chain in fatty acid biosynthesis. The protein is Acyl carrier protein of Xanthomonas axonopodis pv. citri (strain 306).